The primary structure comprises 101 residues: Small ribosomal subunit protein uS14 (101 aa).

The protein belongs to the universal ribosomal protein uS14 family. As to quaternary structure, part of the 30S ribosomal subunit. Contacts proteins S3 and S10.

Binds 16S rRNA, required for the assembly of 30S particles and may also be responsible for determining the conformation of the 16S rRNA at the A site. This is Small ribosomal subunit protein uS14 from Stutzerimonas stutzeri (strain A1501) (Pseudomonas stutzeri).